We begin with the raw amino-acid sequence, 335 residues long: UPF0353 protein Mjls_2492 (335 aa).

The next 2 membrane-spanning stretches (helical) occupy residues 18 to 38 (WFFL…IVAL) and 67 to 87 (LPAI…AGPT). A VWFA domain is found at 98–294 (VVMLVIDVSQ…EQLREVYANL (197 aa)). Residues 309 to 329 (VGWLRLGALVLALSALAALLL) traverse the membrane as a helical segment.

The protein belongs to the UPF0353 family.

It localises to the cell membrane. This Mycobacterium sp. (strain JLS) protein is UPF0353 protein Mjls_2492.